Here is a 774-residue protein sequence, read N- to C-terminus: E3 ubiquitin-protein ligase RFWD3 (774 aa).

Serine 46 and serine 63 each carry phosphoserine; by ATM and ATR. Disordered stretches follow at residues 95–116, 139–225, and 257–280; these read NPRT…PASS, PSSS…AEYG, and GGKT…ASMD. Positions 106–116 are enriched in polar residues; sequence SDGNHTIPASS. A compositionally biased stretch (basic residues) spans 150-162; sequence RTRRRVSASRRAR. A compositionally biased stretch (low complexity) spans 211-221; that stretch reads SSSSDSDSDSS. The RING-type; degenerate zinc finger occupies 287 to 331; sequence CTICLEQWTNAGDHRLSALRCGHLFGYRCISTWLKGQVRKCPQCN. A coiled-coil region spans residues 361 to 413; that stretch reads SLLKEQMLRKQAELESAQCRLQLQVLTDKCTRLQRRVQDLQKLTSHQSQNLQQ. 3 WD repeats span residues 495–537, 539–577, and 583–628; these read MHGK…QTYN, GRPV…SHVQ, and KARC…SHWP.

In terms of assembly, interacts with MDM2 and p53/TP53. Binds to the RPA complex via direct interaction with RPA2. Interacts with RAD51. Post-translationally, phosphorylated at Ser-46 and Ser-63 upon DNA damage by ATM or ATR. ATM phosphorylation occurs at early times upon DNA damage, while ATR is the major kinase at later times. Phosphorylation by ATM and ATR is required to stabilize p53/TP53. Part of the phosphorylation depends upon RPA2 presence.

The protein resides in the nucleus. Its subcellular location is the PML body. It localises to the cytoplasm. The enzyme catalyses S-ubiquitinyl-[E2 ubiquitin-conjugating enzyme]-L-cysteine + [acceptor protein]-L-lysine = [E2 ubiquitin-conjugating enzyme]-L-cysteine + N(6)-ubiquitinyl-[acceptor protein]-L-lysine.. It participates in protein modification; protein ubiquitination. In terms of biological role, E3 ubiquitin-protein ligase required for the repair of DNA interstrand cross-links (ICL) in response to DNA damage. Plays a key role in RPA-mediated DNA damage signaling and repair. Acts by mediating ubiquitination of the RPA complex (RPA1, RPA2 and RPA3 subunits) and RAD51 at stalled replication forks, leading to remove them from DNA damage sites and promote homologous recombination. Also mediates the ubiquitination of p53/TP53 in the late response to DNA damage, and acts as a positive regulator of p53/TP53 stability, thereby regulating the G1/S DNA damage checkpoint. May act by catalyzing the formation of short polyubiquitin chains on p53/TP53 that are not targeted to the proteasome. In response to ionizing radiation, interacts with MDM2 and enhances p53/TP53 ubiquitination, possibly by restricting MDM2 from extending polyubiquitin chains on ubiquitinated p53/TP53. Required to translesion DNA synthesis across DNA-protein cross-link adducts by catalyzing ubiquitination of proteins on single-stranded DNA (ssDNA). The polypeptide is E3 ubiquitin-protein ligase RFWD3 (Homo sapiens (Human)).